A 209-amino-acid chain; its full sequence is Octanoyltransferase (209 aa).

The 181-residue stretch at 29–209 (GSGDELVWML…KKSFVKIFGE (181 aa)) folds into the BPL/LPL catalytic domain. Substrate contacts are provided by residues 68–75 (RGGKYTYH), 141–143 (AIG), and 154–156 (GIA). The active-site Acyl-thioester intermediate is the cysteine 172.

The protein belongs to the LipB family.

The protein resides in the cytoplasm. It carries out the reaction octanoyl-[ACP] + L-lysyl-[protein] = N(6)-octanoyl-L-lysyl-[protein] + holo-[ACP] + H(+). It participates in protein modification; protein lipoylation via endogenous pathway; protein N(6)-(lipoyl)lysine from octanoyl-[acyl-carrier-protein]: step 1/2. Its function is as follows. Catalyzes the transfer of endogenously produced octanoic acid from octanoyl-acyl-carrier-protein onto the lipoyl domains of lipoate-dependent enzymes. Lipoyl-ACP can also act as a substrate although octanoyl-ACP is likely to be the physiological substrate. The polypeptide is Octanoyltransferase (Neorickettsia sennetsu (strain ATCC VR-367 / Miyayama) (Ehrlichia sennetsu)).